The sequence spans 98 residues: N(2)-fixation sustaining protein CowN (98 aa).

It belongs to the CowN family.

Is required to sustain N(2)-dependent growth in the presence of low levels of carbon monoxide (CO). Probably acts by protecting the N(2) fixation ability of the nitrogenase complex, which is inactivated in the presence of CO. The chain is N(2)-fixation sustaining protein CowN from Paramagnetospirillum magneticum (strain ATCC 700264 / AMB-1) (Magnetospirillum magneticum).